A 193-amino-acid chain; its full sequence is Imidazoleglycerol-phosphate dehydratase (193 aa).

This sequence belongs to the imidazoleglycerol-phosphate dehydratase family.

It is found in the cytoplasm. It catalyses the reaction D-erythro-1-(imidazol-4-yl)glycerol 3-phosphate = 3-(imidazol-4-yl)-2-oxopropyl phosphate + H2O. It participates in amino-acid biosynthesis; L-histidine biosynthesis; L-histidine from 5-phospho-alpha-D-ribose 1-diphosphate: step 6/9. The sequence is that of Imidazoleglycerol-phosphate dehydratase (hisB) from Saccharolobus solfataricus (strain ATCC 35092 / DSM 1617 / JCM 11322 / P2) (Sulfolobus solfataricus).